The following is a 243-amino-acid chain: Sugar fermentation stimulation protein homolog (243 aa).

This sequence belongs to the SfsA family.

This chain is Sugar fermentation stimulation protein homolog, found in Bdellovibrio bacteriovorus (strain ATCC 15356 / DSM 50701 / NCIMB 9529 / HD100).